Consider the following 226-residue polypeptide: UPF0758 protein SPJ_1027 (226 aa).

Residues 103–225 (SILSSQKLAK…YFSYREKTDL (123 aa)) form the MPN domain. Zn(2+) contacts are provided by His174, His176, and Asp187. Residues 174–187 (HNHPSGAVAPSQND) carry the JAMM motif motif.

It belongs to the UPF0758 family.

In Streptococcus pneumoniae (strain JJA), this protein is UPF0758 protein SPJ_1027.